A 229-amino-acid polypeptide reads, in one-letter code: UPF0500 protein C1orf216 (229 aa).

Residues 1-144 (MFAIQPGLAE…RGPGPPDPLL (144 aa)) are disordered. Residues 62–71 (SESPSDNQAF) show a composition bias toward polar residues. Low complexity-rich tracts occupy residues 84 to 93 (PPEGAEIPGA) and 115 to 126 (SSSLSIDSRSSS).

This sequence belongs to the UPF0500 family.

This Homo sapiens (Human) protein is UPF0500 protein C1orf216 (C1orf216).